The following is a 472-amino-acid chain: MAMKINTGEFHERVEKGIHNTFMRGAVAGAQERLRTRRLEAAQELGNWEEWRALGEEIRQHTLENLDYYLMQLSENVKKRGGHVFFAQTAEEANDYICRVVASKQAKKIVKSKSMVTEEIHMNAALEKLGCEVIETDLGEYILQVDDHDPPSHIVAPALHKNKEQIRDVFQQKLAYTKTEKPEELALHARAMLRQQYLTADVGITGCNFAVAESGSITLVTNEGNADLVTALPKTQITVMGMERIVPTFEEMEVLVSLLTRSAVGQKLTSYITVLTGPREEGEVDGPEEFHLVIVDNGRSDILGTEFQPVLQCIRCAACVNVCPVYRHIGGHSYGSIYSGPIGAVLSPLLGGYDDYKELPYASTLCAACTEACPVKIPLHELLLKHRQTIVEREGKAPISEKLAMKAFGLGAASSLLYKLGSKIAPTAVNPFTTNDRISKGPGPLKAWTDIREFPAPEKERFRDWLKQRGNE.

2 4Fe-4S ferredoxin-type domains span residues 304 to 334 and 353 to 382; these read GTEF…GHSY and YDDY…LHEL. Residues Cys-313, Cys-316, Cys-319, Cys-323, Cys-366, Cys-369, and Cys-373 each coordinate [4Fe-4S] cluster.

Belongs to the LutB/YkgF family.

Is involved in L-lactate degradation and allows cells to grow with lactate as the sole carbon source. Has probably a role as an electron transporter during oxidation of L-lactate. The protein is Lactate utilization protein B of Anoxybacillus flavithermus (strain DSM 21510 / WK1).